The primary structure comprises 598 residues: Fumarate reductase flavoprotein subunit (598 aa).

FAD-binding positions include 12 to 16, 36 to 38, 44 to 52, 156 to 158, and aspartate 212; these read GAGGA, ISK, SHTVAAEGG, and HFV. Histidine 45 is modified (tele-8alpha-FAD histidine). Active-site residues include histidine 233 and arginine 249. Residues 356 to 357, glutamate 380, and 391 to 397 contribute to the FAD site; these read HY and RLGSNSL. The disordered stretch occupies residues 577–598; it reads AKRVYGGEATAQDKQNKEKANG.

Belongs to the FAD-dependent oxidoreductase 2 family. FRD/SDH subfamily. As to quaternary structure, part of an enzyme complex containing four subunits: a flavoprotein (FrdA), an iron-sulfur protein (FrdB), and two hydrophobic anchor proteins (FrdC and FrdD). Requires FAD as cofactor.

The protein localises to the cell inner membrane. The catalysed reaction is a quinone + succinate = fumarate + a quinol. It catalyses the reaction a menaquinone + succinate = a menaquinol + fumarate. Its function is as follows. Two distinct, membrane-bound, FAD-containing enzymes are responsible for the catalysis of fumarate and succinate interconversion; the fumarate reductase is used in anaerobic growth, and the succinate dehydrogenase is used in aerobic growth. The sequence is that of Fumarate reductase flavoprotein subunit (frdA) from Proteus vulgaris.